The chain runs to 87 residues: Phosphoribosyl-ATP pyrophosphatase (87 aa).

Belongs to the PRA-PH family.

The protein resides in the cytoplasm. It catalyses the reaction 1-(5-phospho-beta-D-ribosyl)-ATP + H2O = 1-(5-phospho-beta-D-ribosyl)-5'-AMP + diphosphate + H(+). Its pathway is amino-acid biosynthesis; L-histidine biosynthesis; L-histidine from 5-phospho-alpha-D-ribose 1-diphosphate: step 2/9. This chain is Phosphoribosyl-ATP pyrophosphatase, found in Saccharopolyspora erythraea (strain ATCC 11635 / DSM 40517 / JCM 4748 / NBRC 13426 / NCIMB 8594 / NRRL 2338).